A 143-amino-acid polypeptide reads, in one-letter code: MRFMGKNKFHTGPGPSQRQLRVGETIRRALSDVLARGDVHDTDLNRLSVTVGEVRASPDLKIATAYVLPLGGQGKDEVIALLARNKGELRRLVAKKLTLKFAPDLRFQLDETFDRMDETREMLNRAEVKRDTGPVPAGESDTE.

Positions 1-20 (MRFMGKNKFHTGPGPSQRQL) are disordered.

It belongs to the RbfA family. As to quaternary structure, monomer. Binds 30S ribosomal subunits, but not 50S ribosomal subunits or 70S ribosomes.

The protein localises to the cytoplasm. Functionally, one of several proteins that assist in the late maturation steps of the functional core of the 30S ribosomal subunit. Associates with free 30S ribosomal subunits (but not with 30S subunits that are part of 70S ribosomes or polysomes). Required for efficient processing of 16S rRNA. May interact with the 5'-terminal helix region of 16S rRNA. The polypeptide is Ribosome-binding factor A (Roseobacter denitrificans (strain ATCC 33942 / OCh 114) (Erythrobacter sp. (strain OCh 114))).